A 233-amino-acid polypeptide reads, in one-letter code: Protein-L-isoaspartate O-methyltransferase (233 aa).

Ser-83 is a catalytic residue.

Belongs to the methyltransferase superfamily. L-isoaspartyl/D-aspartyl protein methyltransferase family.

It is found in the cytoplasm. It catalyses the reaction [protein]-L-isoaspartate + S-adenosyl-L-methionine = [protein]-L-isoaspartate alpha-methyl ester + S-adenosyl-L-homocysteine. Functionally, catalyzes the methyl esterification of L-isoaspartyl residues in peptides and proteins that result from spontaneous decomposition of normal L-aspartyl and L-asparaginyl residues. It plays a role in the repair and/or degradation of damaged proteins. The polypeptide is Protein-L-isoaspartate O-methyltransferase (Opitutus terrae (strain DSM 11246 / JCM 15787 / PB90-1)).